Consider the following 158-residue polypeptide: Small ribosomal subunit protein uS9 (158 aa).

The protein belongs to the universal ribosomal protein uS9 family.

The sequence is that of Small ribosomal subunit protein uS9 from Brucella anthropi (strain ATCC 49188 / DSM 6882 / CCUG 24695 / JCM 21032 / LMG 3331 / NBRC 15819 / NCTC 12168 / Alc 37) (Ochrobactrum anthropi).